Here is a 120-residue protein sequence, read N- to C-terminus: MRLPAQLLGLLMLWVPGSSGDVVMTQSPLSLPVTLGQPASISCRSSQSLVYSDGNTYLNWFQQRPGQSPRRLIYKVSNRDSGVPDRFSGSGSGTDFTLKISRVEAEDVGVYYCMQGTHWP.

An N-terminal signal peptide occupies residues 1 to 20 (MRLPAQLLGLLMLWVPGSSG). The segment at 21-43 (DVVMTQSPLSLPVTLGQPASISC) is framework-1. One can recognise an Ig-like domain in the interval 21 to 120 (DVVMTQSPLS…YYCMQGTHWP (100 aa)). A disulfide bridge connects residues Cys43 and Cys113. The complementarity-determining-1 stretch occupies residues 44-59 (RSSQSLVYSDGNTYLN). A framework-2 region spans residues 60 to 74 (WFQQRPGQSPRRLIY). The tract at residues 75–81 (KVSNRDS) is complementarity-determining-2. Positions 82–113 (GVPDRFSGSGSGTDFTLKISRVEAEDVGVYYC) are framework-3. A complementarity-determining-3 region spans residues 114–120 (MQGTHWP).

As to quaternary structure, immunoglobulins are composed of two identical heavy chains and two identical light chains; disulfide-linked.

The protein resides in the secreted. Its subcellular location is the cell membrane. Its function is as follows. V region of the variable domain of immunoglobulin light chains that participates in the antigen recognition. Immunoglobulins, also known as antibodies, are membrane-bound or secreted glycoproteins produced by B lymphocytes. In the recognition phase of humoral immunity, the membrane-bound immunoglobulins serve as receptors which, upon binding of a specific antigen, trigger the clonal expansion and differentiation of B lymphocytes into immunoglobulins-secreting plasma cells. Secreted immunoglobulins mediate the effector phase of humoral immunity, which results in the elimination of bound antigens. The antigen binding site is formed by the variable domain of one heavy chain, together with that of its associated light chain. Thus, each immunoglobulin has two antigen binding sites with remarkable affinity for a particular antigen. The variable domains are assembled by a process called V-(D)-J rearrangement and can then be subjected to somatic hypermutations which, after exposure to antigen and selection, allow affinity maturation for a particular antigen. The polypeptide is Immunoglobulin kappa variable 2-30 (Homo sapiens (Human)).